The sequence spans 203 residues: Probable GTP-binding protein EngB (203 aa).

The 176-residue stretch at 24–199 folds into the EngB-type G domain; sequence DGSEVAFAGR…HTVIETWLGL (176 aa). Residues 32 to 39, 59 to 63, 77 to 80, 144 to 147, and 178 to 180 contribute to the GTP site; these read GRSNAGKS, GRTQQ, DLPG, TKAD, and FSS. Mg(2+) is bound by residues serine 39 and threonine 61.

This sequence belongs to the TRAFAC class TrmE-Era-EngA-EngB-Septin-like GTPase superfamily. EngB GTPase family. The cofactor is Mg(2+).

Necessary for normal cell division and for the maintenance of normal septation. This chain is Probable GTP-binding protein EngB, found in Xylella fastidiosa (strain 9a5c).